Consider the following 1703-residue polypeptide: Stress response protein NST1 (1703 aa).

Disordered stretches follow at residues 1–91, 243–288, 347–484, 566–724, 759–807, 843–1292, 1353–1407, 1424–1465, 1516–1537, 1558–1581, 1595–1637, and 1672–1703; these read MAKS…AKDA, DQPL…PLPP, HALR…IWST, VSSG…GLGS, MHRE…EQRM, LREL…LGAP, FSPM…IGPI, HTGA…DIID, SSFSGNNPTAPGPLSPAFNGGG, ASTPGAGSSGSGMAGGAASDPWAR, EQPG…HHQL, and GAPGSNALHPGAIGSALSPTLPGARHVSGSHE. Positions 7–36 are enriched in low complexity; the sequence is PRSTPAARAAAVPPPRLAAAAQQQHHQQQP. The segment covering 37–48 has biased composition (pro residues); it reads PSTPPAPVPPTK. A compositionally biased stretch (polar residues) spans 57-66; the sequence is PPRSASPVSN. The span at 77 to 86 shows a compositional bias: basic residues; the sequence is AKKKKKKSKS. A compositionally biased stretch (polar residues) spans 253 to 273; the sequence is NTANNAHPTNVNGAYGQYSSS. A compositionally biased stretch (pro residues) spans 274-288; it reads PNPPPTQPPVEPLPP. Over residues 365-376 the composition is skewed to basic residues; sequence SKNKKKKKKKKG. The segment covering 384–393 has biased composition (basic and acidic residues); the sequence is HGDDEAHEIE. The segment covering 396–409 has biased composition (pro residues); that stretch reads VPPPKPVPNHPPPS. Composition is skewed to low complexity over residues 410–419 and 453–464; these read TNVSSVARNS and SSNSGKRSVSSS. Positions 572–581 are enriched in pro residues; that stretch reads IPPPPGPGPF. Over residues 614 to 650 the composition is skewed to basic residues; it reads THTHTHAHTHTHTHTHTHTHTHAHQHPHPHPHGRKAS. Residues 657–690 show a composition bias toward acidic residues; that stretch reads DGYDDDELDDDAEYDDDDDDADYDDEDEDDDVEL. Basic and acidic residues predominate over residues 691-703; sequence EKERAREDYDKRN. The stretch at 748-1031 forms a coiled coil; the sequence is LEMMEQLAER…AKQAAAAASR (284 aa). Acidic residues predominate over residues 771 to 802; it reads ASDDEDDVDGPDDVDDEDLDEEDEDEEDEILT. 3 stretches are compositionally biased toward basic and acidic residues: residues 853–866, 874–896, and 904–1023; these read EKAREARRMKESQK, QREAKEAERLKKDQERAAAEAEV, and RDAE…REAK. 2 stretches are compositionally biased toward low complexity: residues 1024 to 1037 and 1111 to 1135; these read QAAAAASRGASAAQ and AGGLAAAVAASSVAPAGSSSNAVGS. Residues 1138–1148 show a composition bias toward pro residues; the sequence is PAPPQGLPPRP. Positions 1158–1167 are enriched in low complexity; sequence SSSQTSSVSV. Residues 1200 to 1219 show a composition bias toward polar residues; the sequence is LNAQSNVPMPSAKTPGSSIS. A compositionally biased stretch (low complexity) spans 1269–1291; sequence QNSGMFGSNGSMSSSLQSPSLGA. Positions 1431–1444 are enriched in low complexity; sequence GRSSSTTSGSGATS. Positions 1598 to 1619 are enriched in gly residues; sequence GGNGVGAGSNGGTPSGLGGIGG.

Belongs to the NST1 family.

The protein resides in the cytoplasm. Its function is as follows. May act as a negative regulator of salt tolerance. The chain is Stress response protein NST1 (NST1) from Mycosarcoma maydis (Corn smut fungus).